The sequence spans 119 residues: NADH-quinone oxidoreductase subunit A (119 aa).

3 consecutive transmembrane segments (helical) span residues 7–27, 63–83, and 88–108; these read YPVL…VSIG, LVAI…PWGV, and IGWP…LGFA.

It belongs to the complex I subunit 3 family. In terms of assembly, NDH-1 is composed of 14 different subunits. Subunits NuoA, H, J, K, L, M, N constitute the membrane sector of the complex.

It localises to the cell inner membrane. The catalysed reaction is a quinone + NADH + 5 H(+)(in) = a quinol + NAD(+) + 4 H(+)(out). Its function is as follows. NDH-1 shuttles electrons from NADH, via FMN and iron-sulfur (Fe-S) centers, to quinones in the respiratory chain. The immediate electron acceptor for the enzyme in this species is believed to be ubiquinone. Couples the redox reaction to proton translocation (for every two electrons transferred, four hydrogen ions are translocated across the cytoplasmic membrane), and thus conserves the redox energy in a proton gradient. The chain is NADH-quinone oxidoreductase subunit A from Burkholderia vietnamiensis (strain G4 / LMG 22486) (Burkholderia cepacia (strain R1808)).